The primary structure comprises 238 residues: Protein shisa-3 homolog (238 aa).

An N-terminal signal peptide occupies residues 1–21 (MRALLALCLLLGWLRWGPAGA). Topologically, residues 22–98 (QQSGEYCHGW…GITAQPVYVP (77 aa)) are lumenal. Residues 99-119 (FLIVGSIFIAFIILGSVVAIY) form a helical membrane-spanning segment. Over 120–238 (CCTCLRPKEP…GKSCPDFSSS (119 aa)) the chain is Cytoplasmic. The segment at 151–173 (TSTSPRAPSRQSSTATSSSSTGG) is disordered. Over residues 159 to 173 (SRQSSTATSSSSTGG) the composition is skewed to low complexity.

Belongs to the shisa family.

The protein localises to the endoplasmic reticulum membrane. Its function is as follows. Plays an essential role in the maturation of presomitic mesoderm cells by individual attenuation of both FGF and WNT signaling. The polypeptide is Protein shisa-3 homolog (SHISA3) (Homo sapiens (Human)).